Consider the following 290-residue polypeptide: MKYRKLIILVLSILIILPVSTLDGHHIANADDDSPKKLKYKENSALALNYHRVRKANFLNNFIYFFSSSKEIKNYSVSQSQFESQIKWLKSHDAKFLTLKEFLYYKKKGKFPKRSVWINFDDMDETIYENAYPILKKYKIPATGFIITGHVGEENFHNLDMISKKELKEMYKTGLWEFETHTHDLHNLSKNNKSKLMKASEATIIKDLNKSEKYLTKNFKKSQKTIAYPYGLMNDDKLPVIKKAGLKYGFSLEEKAVTPNSNDYYIPRILISDDAFEHLIKRWDGFHEKD.

The N-terminal stretch at 1-28 is a signal peptide; that stretch reads MKYRKLIILVLSILIILPVSTLDGHHIA. A NodB homology domain is found at 114 to 290; that stretch reads RSVWINFDDM…KRWDGFHEKD (177 aa).

This sequence belongs to the polysaccharide deacetylase family.

Its subcellular location is the secreted. It localises to the cell wall. Functionally, catalyzes the N-deacetylation of poly-beta-1,6-N-acetyl-D-glucosamine (PNAG, also referred to as PIA), a biofilm adhesin polysaccharide. N-deacetylation is crucial for attachment of the polysaccharide to the bacterial cell surface; it leads to the introduction of positive charges in the otherwise neutral PIA polymer, allowing electrostatic interactions. The polypeptide is Poly-beta-1,6-N-acetyl-D-glucosamine N-deacetylase (icaB) (Staphylococcus aureus (strain Mu50 / ATCC 700699)).